A 131-amino-acid polypeptide reads, in one-letter code: Phosphoribosyl-AMP cyclohydrolase (131 aa).

Asp-80 is a binding site for Mg(2+). Residue Cys-81 participates in Zn(2+) binding. Mg(2+) contacts are provided by Asp-82 and Asp-84. Cys-98 and Cys-105 together coordinate Zn(2+).

It belongs to the PRA-CH family. In terms of assembly, homodimer. Mg(2+) is required as a cofactor. Zn(2+) serves as cofactor.

It is found in the cytoplasm. The catalysed reaction is 1-(5-phospho-beta-D-ribosyl)-5'-AMP + H2O = 1-(5-phospho-beta-D-ribosyl)-5-[(5-phospho-beta-D-ribosylamino)methylideneamino]imidazole-4-carboxamide. The protein operates within amino-acid biosynthesis; L-histidine biosynthesis; L-histidine from 5-phospho-alpha-D-ribose 1-diphosphate: step 3/9. Its function is as follows. Catalyzes the hydrolysis of the adenine ring of phosphoribosyl-AMP. This is Phosphoribosyl-AMP cyclohydrolase from Azoarcus sp. (strain BH72).